The following is a 590-amino-acid chain: Dystrobrevin-1 (590 aa).

Over residues M1 to P10 the composition is skewed to gly residues. The segment at M1 to M25 is disordered. The ZZ-type zinc-finger motif lies at Y259–S315. Zn(2+) contacts are provided by C264, C267, C279, C282, C288, C291, H301, and H305. Positions S434 to G508 form a coiled coil. The interval D468–F590 is essential for interaction with ctn-1. The essential for interaction with dys-1 stretch occupies residues M484 to R490.

This sequence belongs to the dystrophin family. Dystrobrevin subfamily. In terms of assembly, component of the dystrophin glycoprotein complex (DGC). Interacts with dystrophin (dys-1) and syntrophin (stn-1) to form the DGC. Interacts (via C-terminus) with ctn-1 (via N-terminus); the interaction is required for localization of the dystrophin complex and ctn-1 near dense bodies in muscle cells. From late embryogenesis to adulthood, expressed in neurons and muscles; particularly strong in the ventral nerve cord and in muscles of the body wall, head pharyngeal, and vulva; weaker in the intestinal muscle (at protein level).

The protein localises to the cytoplasm. Its function is as follows. Plays a role in cholinergic transmission and as a functional partner of dystrophin (dys-1), necessary for muscle maintenance. Required for localization of ctn-1 near dense bodies in muscle cells. In Caenorhabditis elegans, this protein is Dystrobrevin-1.